A 477-amino-acid polypeptide reads, in one-letter code: Glutamyl-tRNA reductase (477 aa).

Residues 49–52 (TCNR), Ser109, 114–116 (EGQ), and Gln120 contribute to the substrate site. Cys50 acts as the Nucleophile in catalysis. 221–226 (GAGSMS) contacts NADP(+).

Belongs to the glutamyl-tRNA reductase family. Homodimer.

The enzyme catalyses (S)-4-amino-5-oxopentanoate + tRNA(Glu) + NADP(+) = L-glutamyl-tRNA(Glu) + NADPH + H(+). The protein operates within porphyrin-containing compound metabolism; protoporphyrin-IX biosynthesis; 5-aminolevulinate from L-glutamyl-tRNA(Glu): step 1/2. Functionally, catalyzes the NADPH-dependent reduction of glutamyl-tRNA(Glu) to glutamate 1-semialdehyde (GSA). The protein is Glutamyl-tRNA reductase of Thermobifida fusca (strain YX).